The following is a 784-amino-acid chain: LPS-assembly protein LptD (784 aa).

The N-terminal stretch at methionine 1–alanine 24 is a signal peptide. Cystine bridges form between cysteine 31–cysteine 724 and cysteine 173–cysteine 725.

This sequence belongs to the LptD family. In terms of assembly, component of the lipopolysaccharide transport and assembly complex. Interacts with LptE and LptA. Post-translationally, contains two intramolecular disulfide bonds.

It is found in the cell outer membrane. Its function is as follows. Together with LptE, is involved in the assembly of lipopolysaccharide (LPS) at the surface of the outer membrane. This Escherichia coli O1:K1 / APEC protein is LPS-assembly protein LptD.